A 396-amino-acid chain; its full sequence is Cystathionine beta-lyase (396 aa).

Lys211 is modified (N6-(pyridoxal phosphate)lysine).

It belongs to the trans-sulfuration enzymes family. In terms of assembly, homotetramer. It depends on pyridoxal 5'-phosphate as a cofactor.

Its subcellular location is the cytoplasm. The enzyme catalyses L,L-cystathionine + H2O = L-homocysteine + pyruvate + NH4(+). It catalyses the reaction an S-substituted L-cysteine + H2O = a thiol + pyruvate + NH4(+). It participates in amino-acid biosynthesis; L-methionine biosynthesis via de novo pathway; L-homocysteine from L-cystathionine: step 1/1. In terms of biological role, catalyzes the cleavage of cystathionine to homocysteine, pyruvate and ammonia during methionine biosynthesis. The chain is Cystathionine beta-lyase (metC) from Haemophilus influenzae (strain ATCC 51907 / DSM 11121 / KW20 / Rd).